Here is a 342-residue protein sequence, read N- to C-terminus: Immune-associated nucleotide-binding protein 9 (342 aa).

The AIG1-type G domain occupies Asn-22–Gln-229. The G1 stretch occupies residues Gly-31–Ser-38. GTP is bound by residues Gly-31–Ala-39 and Ser-52. The G2 stretch occupies residues Gly-58–Thr-62. The interval Asp-80 to Gly-83 is G3. Residues Thr-149–Asp-152 are G4. The tract at residues Asn-188–Lys-190 is G5. Asn-189 lines the GTP pocket. Positions Glu-276–Leu-342 form a coiled coil.

This sequence belongs to the TRAFAC class TrmE-Era-EngA-EngB-Septin-like GTPase superfamily. AIG1/Toc34/Toc159-like paraseptin GTPase family. IAN subfamily. As to expression, mainly expressed in leaves.

The sequence is that of Immune-associated nucleotide-binding protein 9 from Arabidopsis thaliana (Mouse-ear cress).